Here is a 320-residue protein sequence, read N- to C-terminus: Lipoyl synthase (320 aa).

[4Fe-4S] cluster contacts are provided by Cys-67, Cys-72, Cys-78, Cys-93, Cys-97, Cys-100, and Ser-307. The Radical SAM core domain maps to 79-296 (FNHGTATFMI…RDKANEMGFE (218 aa)).

The protein belongs to the radical SAM superfamily. Lipoyl synthase family. Requires [4Fe-4S] cluster as cofactor.

It localises to the cytoplasm. It catalyses the reaction [[Fe-S] cluster scaffold protein carrying a second [4Fe-4S](2+) cluster] + N(6)-octanoyl-L-lysyl-[protein] + 2 oxidized [2Fe-2S]-[ferredoxin] + 2 S-adenosyl-L-methionine + 4 H(+) = [[Fe-S] cluster scaffold protein] + N(6)-[(R)-dihydrolipoyl]-L-lysyl-[protein] + 4 Fe(3+) + 2 hydrogen sulfide + 2 5'-deoxyadenosine + 2 L-methionine + 2 reduced [2Fe-2S]-[ferredoxin]. Its pathway is protein modification; protein lipoylation via endogenous pathway; protein N(6)-(lipoyl)lysine from octanoyl-[acyl-carrier-protein]: step 2/2. Functionally, catalyzes the radical-mediated insertion of two sulfur atoms into the C-6 and C-8 positions of the octanoyl moiety bound to the lipoyl domains of lipoate-dependent enzymes, thereby converting the octanoylated domains into lipoylated derivatives. This Haemophilus influenzae (strain ATCC 51907 / DSM 11121 / KW20 / Rd) protein is Lipoyl synthase.